The sequence spans 230 residues: Urease accessory protein UreF (230 aa).

Belongs to the UreF family. As to quaternary structure, ureD, UreF and UreG form a complex that acts as a GTP-hydrolysis-dependent molecular chaperone, activating the urease apoprotein by helping to assemble the nickel containing metallocenter of UreC. The UreE protein probably delivers the nickel.

It is found in the cytoplasm. In terms of biological role, required for maturation of urease via the functional incorporation of the urease nickel metallocenter. In Polynucleobacter asymbioticus (strain DSM 18221 / CIP 109841 / QLW-P1DMWA-1) (Polynucleobacter necessarius subsp. asymbioticus), this protein is Urease accessory protein UreF.